The following is a 74-amino-acid chain: RNA-binding protein Hfq (74 aa).

The region spanning 9–69 is the Sm domain; it reads DQYLNQLRKN…ISTFSPVKNV (61 aa).

The protein belongs to the Hfq family. As to quaternary structure, homohexamer.

In terms of biological role, RNA chaperone that binds small regulatory RNA (sRNAs) and mRNAs to facilitate mRNA translational regulation in response to envelope stress, environmental stress and changes in metabolite concentrations. Also binds with high specificity to tRNAs. The chain is RNA-binding protein Hfq from Oceanobacillus iheyensis (strain DSM 14371 / CIP 107618 / JCM 11309 / KCTC 3954 / HTE831).